A 608-amino-acid polypeptide reads, in one-letter code: Malonate--CoA ligase (608 aa).

The protein belongs to the ATP-dependent AMP-binding enzyme family. In terms of tissue distribution, expressed in flowers.

The protein localises to the cytoplasm. It localises to the nucleus. The catalysed reaction is malonate + ATP + CoA = malonyl-CoA + AMP + diphosphate. In terms of biological role, malonate--CoA ligase that catalyzes the formation of malonyl-CoA directly from malonate and CoA. May be required for the detoxification of malonate. The protein is Malonate--CoA ligase (AAE13) of Arabidopsis thaliana (Mouse-ear cress).